Consider the following 283-residue polypeptide: Zinc-finger homeodomain protein 8 (283 aa).

The segment at 23 to 68 adopts a ZF-HD dimerization-type; degenerate zinc-finger fold; it reads YKECMRNHAAAMGGQAFDGCGEYMPASPDSLKCAACGCHRSFHRRA. 2 disordered regions span residues 131–171 and 244–283; these read AGRA…TKFT and GLGT…PISV. Residues 148 to 161 show a composition bias toward gly residues; it reads GSAGGSGSGGGGIF. Positions 163 to 226 form a DNA-binding region, homeobox; the sequence is RKRFRTKFTP…NHKNQLASSP (64 aa). The span at 244-256 shows a compositional bias: gly residues; sequence GLGTGLGTGISGD. Positions 257 to 266 are enriched in acidic residues; it reads GDGDDDDTDD. Residues 269-283 show a composition bias toward low complexity; sequence PRAAVSSPSPSPISV.

As to quaternary structure, homo- and heterodimer with other ZFHD proteins.

It localises to the nucleus. Functionally, putative transcription factor. The sequence is that of Zinc-finger homeodomain protein 8 (ZHD8) from Oryza sativa subsp. japonica (Rice).